The primary structure comprises 490 residues: Endo-1,6-beta-D-glucanase BGN16.3 (490 aa).

The signal sequence occupies residues 1–28 (MRYALIASMLGQAAISVAMPSEPAHSPR). The Proton donor role is filled by E243. E339 acts as the Nucleophile in catalysis.

Belongs to the glycosyl hydrolase 30 family.

It localises to the secreted. Its subcellular location is the extracellular space. It carries out the reaction Random hydrolysis of (1-&gt;6)-linkages in (1-&gt;6)-beta-D-glucans.. Its function is as follows. Has highest activity on the linear beta-1,6-glucan pustulan. Lower activity against yeast glucan and laminarin (beta-1,3-glucans with beta-1,6-branches). No activity on colloidal chitin, pachyman, starch, cellulose, nigeran, dextran or gentobiose. This chain is Endo-1,6-beta-D-glucanase BGN16.3, found in Trichoderma harzianum (Hypocrea lixii).